Consider the following 286-residue polypeptide: Polyamine aminopropyltransferase (286 aa).

Residues 5-238 (TMWHETLHDQ…GIMTFAWATD (234 aa)) enclose the PABS domain. An S-methyl-5'-thioadenosine-binding site is contributed by glutamine 33. Residues histidine 64 and aspartate 88 each contribute to the spermidine site. S-methyl-5'-thioadenosine is bound by residues glutamate 108 and 140 to 141 (DG). The active-site Proton acceptor is aspartate 158. 158–161 (DCTD) contributes to the spermidine binding site. Residue proline 165 coordinates S-methyl-5'-thioadenosine.

Belongs to the spermidine/spermine synthase family. Homodimer or homotetramer.

The protein resides in the cytoplasm. The catalysed reaction is S-adenosyl 3-(methylsulfanyl)propylamine + putrescine = S-methyl-5'-thioadenosine + spermidine + H(+). It participates in amine and polyamine biosynthesis; spermidine biosynthesis; spermidine from putrescine: step 1/1. Its function is as follows. Catalyzes the irreversible transfer of a propylamine group from the amino donor S-adenosylmethioninamine (decarboxy-AdoMet) to putrescine (1,4-diaminobutane) to yield spermidine. The chain is Polyamine aminopropyltransferase from Salmonella paratyphi A (strain ATCC 9150 / SARB42).